A 291-amino-acid chain; its full sequence is Pirin (291 aa).

Fe cation is bound by residues His56, His58, His101, and Glu103.

The protein belongs to the pirin family. As to quaternary structure, may interact with NF1/CTF1. Interacts with BCL3. Identified in a complex comprised of PIR, BLC3, NFKB1 and target DNA. Fe cation is required as a cofactor.

It is found in the nucleus. The protein localises to the cytoplasm. It catalyses the reaction quercetin + O2 = 2-(3,4-dihydroxybenzoyloxy)-4,6-dihydroxybenzoate + CO. It functions in the pathway flavonoid metabolism; quercetin degradation. Transcriptional coregulator of NF-kappa-B which facilitates binding of NF-kappa-B proteins to target kappa-B genes in a redox-state-dependent manner. May be required for efficient terminal myeloid maturation of hematopoietic cells. Has quercetin 2,3-dioxygenase activity (in vitro). In Rattus norvegicus (Rat), this protein is Pirin (Pir).